We begin with the raw amino-acid sequence, 328 residues long: Nickel import system permease protein NikB (328 aa).

The next 6 membrane-spanning stretches (helical) occupy residues 11–31 (LMQM…LMKL), 104–124 (LLIS…LGII), 139–159 (VIST…LLFI), 170–190 (ILSQ…AYII), 229–249 (ILPI…GTVV), and 279–299 (VLFI…LTLL). The region spanning 100-297 (APITLLISFS…IINTIADLLT (198 aa)) is the ABC transmembrane type-1 domain.

It belongs to the binding-protein-dependent transport system permease family. OppBC subfamily. In terms of assembly, the complex is composed of two ATP-binding proteins (NikD and NikE), two transmembrane proteins (NikB and NikC) and a solute-binding protein (NikA).

The protein localises to the cell membrane. Part of the ABC transporter complex NikABCDE (Opp2) involved in nickel import. Probably responsible for the translocation of the substrate across the membrane. This is Nickel import system permease protein NikB from Staphylococcus aureus (strain bovine RF122 / ET3-1).